The following is a 72-amino-acid chain: Translation initiation factor IF-1 (72 aa).

In terms of domain architecture, S1-like spans 1 to 72 (MSKDDCIEFE…TKGRIIYRMK (72 aa)).

This sequence belongs to the IF-1 family. Component of the 30S ribosomal translation pre-initiation complex which assembles on the 30S ribosome in the order IF-2 and IF-3, IF-1 and N-formylmethionyl-tRNA(fMet); mRNA recruitment can occur at any time during PIC assembly.

It is found in the cytoplasm. One of the essential components for the initiation of protein synthesis. Stabilizes the binding of IF-2 and IF-3 on the 30S subunit to which N-formylmethionyl-tRNA(fMet) subsequently binds. Helps modulate mRNA selection, yielding the 30S pre-initiation complex (PIC). Upon addition of the 50S ribosomal subunit IF-1, IF-2 and IF-3 are released leaving the mature 70S translation initiation complex. The protein is Translation initiation factor IF-1 of Xylella fastidiosa (strain Temecula1 / ATCC 700964).